The sequence spans 450 residues: Phosphoglucosamine mutase (450 aa).

Ser102 functions as the Phosphoserine intermediate in the catalytic mechanism. Residues Ser102, Asp243, Asp245, and Asp247 each contribute to the Mg(2+) site. Ser102 carries the post-translational modification Phosphoserine.

The protein belongs to the phosphohexose mutase family. It depends on Mg(2+) as a cofactor. Activated by phosphorylation.

It carries out the reaction alpha-D-glucosamine 1-phosphate = D-glucosamine 6-phosphate. Catalyzes the conversion of glucosamine-6-phosphate to glucosamine-1-phosphate. In Agrobacterium fabrum (strain C58 / ATCC 33970) (Agrobacterium tumefaciens (strain C58)), this protein is Phosphoglucosamine mutase.